A 55-amino-acid chain; its full sequence is Large ribosomal subunit protein bL33 (55 aa).

This sequence belongs to the bacterial ribosomal protein bL33 family.

This is Large ribosomal subunit protein bL33 from Proteus mirabilis (strain HI4320).